A 370-amino-acid chain; its full sequence is Protein-glutamate methylesterase/protein-glutamine glutaminase of group 1 operon (370 aa).

The Response regulatory domain maps to 4 to 121; sequence KVLVVDDSGF…SRNPDKVKQL (118 aa). Asp-55 is subject to 4-aspartylphosphate. Residues 150 to 180 are compositionally biased toward low complexity; that stretch reads PASTFTSQAQTRPAAPARAAAPTPAASQSPA. The disordered stretch occupies residues 150-183; the sequence is PASTFTSQAQTRPAAPARAAAPTPAASQSPAPKR. Positions 179 to 370 constitute a CheB-type methylesterase domain; that stretch reads PAPKRKPYKL…IGKHLVEACV (192 aa). Active-site residues include Ser-194, His-221, and Asp-314.

It belongs to the CheB family. Phosphorylated by CheA. Phosphorylation of the N-terminal regulatory domain activates the methylesterase activity.

It localises to the cytoplasm. It carries out the reaction [protein]-L-glutamate 5-O-methyl ester + H2O = L-glutamyl-[protein] + methanol + H(+). The enzyme catalyses L-glutaminyl-[protein] + H2O = L-glutamyl-[protein] + NH4(+). Its function is as follows. Involved in chemotaxis. Part of a chemotaxis signal transduction system that modulates chemotaxis in response to various stimuli. Catalyzes the demethylation of specific methylglutamate residues introduced into the chemoreceptors (methyl-accepting chemotaxis proteins or MCP) by CheR. Also mediates the irreversible deamidation of specific glutamine residues to glutamic acid. This is Protein-glutamate methylesterase/protein-glutamine glutaminase of group 1 operon from Pseudomonas putida (strain ATCC 47054 / DSM 6125 / CFBP 8728 / NCIMB 11950 / KT2440).